The following is a 514-amino-acid chain: 1-pyrroline-5-carboxylate dehydrogenase (514 aa).

Active-site residues include glutamate 286 and cysteine 320.

It belongs to the aldehyde dehydrogenase family. RocA subfamily.

The enzyme catalyses L-glutamate 5-semialdehyde + NAD(+) + H2O = L-glutamate + NADH + 2 H(+). The protein operates within amino-acid degradation; L-proline degradation into L-glutamate; L-glutamate from L-proline: step 2/2. In Staphylococcus aureus (strain MSSA476), this protein is 1-pyrroline-5-carboxylate dehydrogenase.